A 216-amino-acid polypeptide reads, in one-letter code: Peptide methionine sulfoxide reductase MsrA (216 aa).

Cysteine 54 is a catalytic residue.

This sequence belongs to the MsrA Met sulfoxide reductase family.

The catalysed reaction is L-methionyl-[protein] + [thioredoxin]-disulfide + H2O = L-methionyl-(S)-S-oxide-[protein] + [thioredoxin]-dithiol. It carries out the reaction [thioredoxin]-disulfide + L-methionine + H2O = L-methionine (S)-S-oxide + [thioredoxin]-dithiol. In terms of biological role, has an important function as a repair enzyme for proteins that have been inactivated by oxidation. Catalyzes the reversible oxidation-reduction of methionine sulfoxide in proteins to methionine. The protein is Peptide methionine sulfoxide reductase MsrA of Xanthomonas campestris pv. phaseoli.